The chain runs to 138 residues: Transcription antitermination protein NusB (138 aa).

This sequence belongs to the NusB family.

Functionally, involved in transcription antitermination. Required for transcription of ribosomal RNA (rRNA) genes. Binds specifically to the boxA antiterminator sequence of the ribosomal RNA (rrn) operons. The sequence is that of Transcription antitermination protein NusB from Helicobacter pylori (strain ATCC 700392 / 26695) (Campylobacter pylori).